Here is a 161-residue protein sequence, read N- to C-terminus: 2-C-methyl-D-erythritol 2,4-cyclodiphosphate synthase (161 aa).

A divalent metal cation contacts are provided by D14 and H16. 4-CDP-2-C-methyl-D-erythritol 2-phosphate-binding positions include D14–H16 and H40–S41. Position 48 (H48) interacts with a divalent metal cation. 4-CDP-2-C-methyl-D-erythritol 2-phosphate-binding positions include D62 to G64, F142, and R145.

The protein belongs to the IspF family. In terms of assembly, homotrimer. The cofactor is a divalent metal cation.

The catalysed reaction is 4-CDP-2-C-methyl-D-erythritol 2-phosphate = 2-C-methyl-D-erythritol 2,4-cyclic diphosphate + CMP. The protein operates within isoprenoid biosynthesis; isopentenyl diphosphate biosynthesis via DXP pathway; isopentenyl diphosphate from 1-deoxy-D-xylulose 5-phosphate: step 4/6. In terms of biological role, involved in the biosynthesis of isopentenyl diphosphate (IPP) and dimethylallyl diphosphate (DMAPP), two major building blocks of isoprenoid compounds. Catalyzes the conversion of 4-diphosphocytidyl-2-C-methyl-D-erythritol 2-phosphate (CDP-ME2P) to 2-C-methyl-D-erythritol 2,4-cyclodiphosphate (ME-CPP) with a corresponding release of cytidine 5-monophosphate (CMP). The chain is 2-C-methyl-D-erythritol 2,4-cyclodiphosphate synthase from Acidothermus cellulolyticus (strain ATCC 43068 / DSM 8971 / 11B).